A 217-amino-acid chain; its full sequence is Nascent polypeptide-associated complex subunit alpha (217 aa).

Residues 1–45 (MPELTEIKSEAAPSTSAEAKPEDVRVEDDGSDSDSDGGMPGLEEA) are disordered. Residues 19 to 28 (AKPEDVRVED) show a composition bias toward basic and acidic residues. In terms of domain architecture, NAC-A/B spans 70–135 (SRGEKKARKI…AKIEDLSQQA (66 aa)). Positions 154 to 177 (SVGATTSVAPIAEEDEEDVDDTGV) are disordered. The span at 165–176 (AEEDEEDVDDTG) shows a compositional bias: acidic residues. A UBA domain is found at 177–217 (VDEKDIELVITQANTTRAKAIKALKNNNNDIVNAIMELTML).

This sequence belongs to the NAC-alpha family. Part of the nascent polypeptide-associated complex (NAC), consisting of Nac-alpha and bicaudal (bic).

Functionally, may promote appropriate targeting of ribosome-nascent polypeptide complexes. Required for correct localization of the osk/oskar protein to the posterior pole during embryonic development. The osk protein directs the recruitment of molecules responsible for posterior body patterning and germline formation in the embryo. The sequence is that of Nascent polypeptide-associated complex subunit alpha (Nacalpha) from Drosophila melanogaster (Fruit fly).